A 156-amino-acid polypeptide reads, in one-letter code: Putative pre-16S rRNA nuclease (156 aa).

The protein belongs to the YqgF nuclease family.

The protein resides in the cytoplasm. Could be a nuclease involved in processing of the 5'-end of pre-16S rRNA. In Aromatoleum aromaticum (strain DSM 19018 / LMG 30748 / EbN1) (Azoarcus sp. (strain EbN1)), this protein is Putative pre-16S rRNA nuclease.